Reading from the N-terminus, the 226-residue chain is Orotate phosphoribosyltransferase (226 aa).

5-phospho-alpha-D-ribose 1-diphosphate-binding positions include lysine 26, 73–74 (YK), arginine 100, lysine 101, lysine 104, histidine 106, and 128–136 (EDVTTSGKS). The orotate site is built by threonine 132 and arginine 161.

It belongs to the purine/pyrimidine phosphoribosyltransferase family. PyrE subfamily. In terms of assembly, homodimer. Mg(2+) serves as cofactor.

The enzyme catalyses orotidine 5'-phosphate + diphosphate = orotate + 5-phospho-alpha-D-ribose 1-diphosphate. It participates in pyrimidine metabolism; UMP biosynthesis via de novo pathway; UMP from orotate: step 1/2. In terms of biological role, catalyzes the transfer of a ribosyl phosphate group from 5-phosphoribose 1-diphosphate to orotate, leading to the formation of orotidine monophosphate (OMP). This chain is Orotate phosphoribosyltransferase, found in Agathobacter rectalis (strain ATCC 33656 / DSM 3377 / JCM 17463 / KCTC 5835 / VPI 0990) (Eubacterium rectale).